We begin with the raw amino-acid sequence, 500 residues long: NAD(P)H-quinone oxidoreductase chain 4, chloroplastic (500 aa).

The next 15 helical transmembrane spans lie at 4 to 24 (LPWL…IPLF), 31 to 51 (IIRW…TYTF), 87 to 107 (IGPI…AWPV), 111 to 131 (PRLF…LFAS), 134 to 154 (ILLF…LISM), 167 to 187 (FILY…SMGL), 207 to 227 (VVLE…KLPI), 242 to 262 (HYST…YGLI), 274 to 294 (SLFS…AALT), 305 to 325 (IAYS…SMAD), 330 to 350 (GAIL…FLAG), 358 to 378 (TLFL…STMF), 386 to 406 (LALP…GIIT), 416 to 436 (IVIA…LLSM), and 462 to 482 (IFIS…PDLV).

The protein belongs to the complex I subunit 4 family.

Its subcellular location is the plastid. It localises to the chloroplast thylakoid membrane. It catalyses the reaction a plastoquinone + NADH + (n+1) H(+)(in) = a plastoquinol + NAD(+) + n H(+)(out). It carries out the reaction a plastoquinone + NADPH + (n+1) H(+)(in) = a plastoquinol + NADP(+) + n H(+)(out). This chain is NAD(P)H-quinone oxidoreductase chain 4, chloroplastic, found in Cycas taitungensis (Prince sago).